Reading from the N-terminus, the 238-residue chain is MARGQNIRKRTFSDMDTPSDKNIGIHTNSLPKNNLYRRILFKGKISNYSISKDSLAKDHSSKHSISKNGLIGKKRPAPLDISFQSMNSSISSSTQKKTRILDEEIKDQSLSNENDTDSPVIVDITLKPSYMSKTSRITEIIHKMKELNMNRIEDGSSFNKKRSEHDDKNILLHTMEMEEEDCEIEEDIAIDSPYLNTSLSEDDTDSIVGTDYSEKEKETISETESSSDDESYSLYDSF.

The span at 1–10 shows a compositional bias: basic residues; that stretch reads MARGQNIRKR. 2 disordered regions span residues 1 to 26 and 195 to 238; these read MARG…IGIH and LNTS…YDSF.

This sequence belongs to the asfivirus DP238L family.

This is an uncharacterized protein from Ornithodoros (relapsing fever ticks).